Here is a 317-residue protein sequence, read N- to C-terminus: Aspartate carbamoyltransferase catalytic subunit (317 aa).

Arginine 65 and threonine 66 together coordinate carbamoyl phosphate. Lysine 93 is an L-aspartate binding site. Residues arginine 115, histidine 145, and glutamine 148 each coordinate carbamoyl phosphate. L-aspartate is bound by residues arginine 178 and arginine 233. Glycine 274 and proline 275 together coordinate carbamoyl phosphate.

It belongs to the aspartate/ornithine carbamoyltransferase superfamily. ATCase family. In terms of assembly, heterododecamer (2C3:3R2) of six catalytic PyrB chains organized as two trimers (C3), and six regulatory PyrI chains organized as three dimers (R2).

It carries out the reaction carbamoyl phosphate + L-aspartate = N-carbamoyl-L-aspartate + phosphate + H(+). The protein operates within pyrimidine metabolism; UMP biosynthesis via de novo pathway; (S)-dihydroorotate from bicarbonate: step 2/3. Functionally, catalyzes the condensation of carbamoyl phosphate and aspartate to form carbamoyl aspartate and inorganic phosphate, the committed step in the de novo pyrimidine nucleotide biosynthesis pathway. The protein is Aspartate carbamoyltransferase catalytic subunit of Methylobacillus flagellatus (strain ATCC 51484 / DSM 6875 / VKM B-1610 / KT).